The primary structure comprises 386 residues: Putative F-box/kelch-repeat protein At4g11750 (386 aa).

The region spanning 5–51 (PVDLPYIPDDLLLNCLARVSRLYYPILSLVSKRFRSLVASLELYEIR) is the F-box domain. Kelch repeat units follow at residues 187–236 (KIYV…VYDG), 238–285 (LYLF…YGRS), and 287–324 (VLMWYNTEERLWRYLKGLKKLPKLPKDCTCVRLLGYSG).

This chain is Putative F-box/kelch-repeat protein At4g11750, found in Arabidopsis thaliana (Mouse-ear cress).